A 65-amino-acid chain; its full sequence is LTCVTSKSIFGITTEDCPDGQNLCFKRRHYVVPKIYDITRGCVATCPIPENYDSIHCCKTDKCNE.

4 disulfide bridges follow: Cys3/Cys24, Cys17/Cys42, Cys46/Cys57, and Cys58/Cys63.

This sequence belongs to the three-finger toxin family. Short-chain subfamily. Aminergic toxin sub-subfamily. In terms of tissue distribution, expressed by the venom gland.

The protein localises to the secreted. This toxin shows activities on different G-protein coupled receptors. It is highly potent on various alpha-adrenoceptors (ADRA) (subnanomolar affinity for ADRA1A). Order of potency is the following: ADRA1A &gt; ADRA1B &gt; ADRA1D &gt; ADRA2C. It is also found to reversibly bind to muscarinic acetylcholine receptors (CHRM), but the affinity is much weaker (CHRM1 and CHRM2, Ki&gt;1 uM; CHRM3, Ki=140 nM; CHRM4, Ki=120 nM; CHRM5, Ki=350 nM). This is Adrenergic toxin rho-elapitoxin-Dp1a from Dendroaspis polylepis polylepis (Black mamba).